The following is a 107-amino-acid chain: U1-lycotoxin-Ls1o (107 aa).

The signal sequence occupies residues Met1 to Ser20. Residues Glu21–Arg41 constitute a propeptide that is removed on maturation. Cystine bridges form between Cys44/Cys59, Cys51/Cys68, Cys58/Cys86, and Cys70/Cys84.

Belongs to the neurotoxin 19 (CSTX) family. 04 (U1-Lctx) subfamily. Expressed by the venom gland.

Its subcellular location is the secreted. This chain is U1-lycotoxin-Ls1o, found in Lycosa singoriensis (Wolf spider).